Here is a 63-residue protein sequence, read N- to C-terminus: Cecropin (63 aa).

Positions 1–23 (MNFYKIFVFIALILALSVSQSEA) are cleaved as a signal peptide. Arg-62 carries the post-translational modification Arginine amide.

Monomer. In terms of tissue distribution, hemolymph.

The protein localises to the secreted. Functionally, cecropins have lytic and antibacterial activity against several Gram-negative bacteria. The protein is Cecropin of Glossina morsitans morsitans (Savannah tsetse fly).